The sequence spans 270 residues: F420 non-reducing hydrogenase II cytochrome subunit (270 aa).

5 consecutive transmembrane segments (helical) span residues 27–47 (AIAMIVLIITGLKIYAGWEFM), 57–77 (MIAVPFLLAVNWILIPYNIFS), 139–159 (ILIPLEGLALFLITVSGIVLY), 173–193 (WIISISGMIAPTFGMTPVGFL), and 195–215 (VLHLLMTYWFIFELVVHVGIL).

Belongs to the HupC/HyaC/HydC family. In terms of assembly, composed of a large subunit (VhtA), a small subunit (VhtG) and a cytochrome subunit (VhtC). Heme b is required as a cofactor.

The protein resides in the cell membrane. It carries out the reaction methanophenazine + H2 = dihydromethanophenazine. Its function is as follows. Part of the F420 non-reducing hydrogenase II complex that catalyzes the reduction of methanophenazine to dihydromethanophenazine. The protein is F420 non-reducing hydrogenase II cytochrome subunit of Methanosarcina mazei (strain ATCC BAA-159 / DSM 3647 / Goe1 / Go1 / JCM 11833 / OCM 88) (Methanosarcina frisia).